Reading from the N-terminus, the 540-residue chain is MAKDIKFSADARSAMVRGVDILADTVKVTLGPKGRNVVLEKAFGSPLITNDGVTIAKEIELEDHFENMGAKLVSEVASKTNDIAGDGTTTATVLTQAIVREGLKNVTAGANPIGIRRGIETAVSAAVEELKEIAQPVSGKEAIAQVAAVSSRSEKVGEYISEAMERVGNDGVITIEESRGMETELEVVEGMQFDRGYLSQYMVTDNEKMVSELENPYILITDKKISNIQEILPLLEEVLKTNRPLLIIADDVDGEALPTLVLNKIRGTFNVVAVKAPGFGDRRKAMLEDIAILTGGTVVTEDLGLDLKDATMQVLGQSAKVTVDKDSTVIVEGAGDSSAIANRVAIIKSQMEATTSDFDREKLQERLAKLAGGVAVIKVGAATETELKEMKLRIEDALNATRAAVEEGIVSGGGTALVNVIEKVAALKLNGDEETGRNIVLRALEEPVRQIAYNAGYEGSVIIERLKQSEIGTGFNAANGEWVDMVTTGIIDPVKVTRSALQNAASVASLILTTEAVVANKPEPEAPTAPAMDPSMMGGF.

Residues 29 to 32 (TLGP), 86 to 90 (DGTTT), G413, 476 to 478 (NAA), and D492 each bind ATP.

This sequence belongs to the chaperonin (HSP60) family. Forms a cylinder of 14 subunits composed of two heptameric rings stacked back-to-back. Interacts with the co-chaperonin GroES.

The protein resides in the cytoplasm. The enzyme catalyses ATP + H2O + a folded polypeptide = ADP + phosphate + an unfolded polypeptide.. Its function is as follows. Together with its co-chaperonin GroES, plays an essential role in assisting protein folding. The GroEL-GroES system forms a nano-cage that allows encapsulation of the non-native substrate proteins and provides a physical environment optimized to promote and accelerate protein folding. This is Chaperonin GroEL from Streptococcus agalactiae serotype V (strain ATCC BAA-611 / 2603 V/R).